Here is a 659-residue protein sequence, read N- to C-terminus: Fructose-1,6-bisphosphatase class 3 (659 aa).

Belongs to the FBPase class 3 family. The cofactor is Mn(2+).

It carries out the reaction beta-D-fructose 1,6-bisphosphate + H2O = beta-D-fructose 6-phosphate + phosphate. It participates in carbohydrate biosynthesis; gluconeogenesis. The polypeptide is Fructose-1,6-bisphosphatase class 3 (Clostridium botulinum (strain Alaska E43 / Type E3)).